We begin with the raw amino-acid sequence, 185 residues long: Capsid protein (185 aa).

The tract at residues 136–185 (NAPILSTLPETTVVRRRDRGRSPRRRTPSPRRRRSQSPRRRRSQSRESQC) is disordered. Residues 149 to 178 (VRRRDRGRSPRRRTPSPRRRRSQSPRRRRS) are compositionally biased toward basic residues. Phosphoserine; by host occurs at positions 157, 164, and 172. The 1; half-length repeat unit spans residues 157–163 (SPRRRTP). Positions 157–179 (SPRRRTPSPRRRRSQSPRRRRSQ) are 3 X 8 AA repeats of S-P-R-R-R-[PR]-S-Q. Positions 160–177 (RRTPSPRRRRSQSPRRRR) match the Bipartite nuclear localization signal motif. 2 repeat units span residues 164–171 (SPRRRRSQ) and 172–179 (SPRRRRSQ). The interval 179 to 185 (QSRESQC) is RNA binding.

This sequence belongs to the orthohepadnavirus core antigen family. In terms of assembly, homodimerizes, then multimerizes. Interacts with cytosol exposed regions of viral L glycoprotein present in the reticulum-to-Golgi compartment. Interacts with human FLNB. Phosphorylated form interacts with host importin alpha; this interaction depends on the exposure of the NLS, which itself depends upon genome maturation and/or phosphorylation of the capsid protein. Interacts with host NUP153. In terms of processing, phosphorylated by host SRPK1, SRPK2, and maybe protein kinase C or GAPDH. Phosphorylation is critical for pregenomic RNA packaging. Protein kinase C phosphorylation is stimulated by HBx protein and may play a role in transport of the viral genome to the nucleus at the late step during the viral replication cycle.

It localises to the virion. It is found in the host cytoplasm. Its function is as follows. Self assembles to form an icosahedral capsid. Most capsids appear to be large particles with an icosahedral symmetry of T=4 and consist of 240 copies of capsid protein, though a fraction forms smaller T=3 particles consisting of 180 capsid proteins. Entering capsids are transported along microtubules to the nucleus. Phosphorylation of the capsid is thought to induce exposure of nuclear localization signal in the C-terminal portion of the capsid protein that allows binding to the nuclear pore complex via the importin (karyopherin-) alpha and beta. Capsids are imported in intact form through the nuclear pore into the nuclear basket, where it probably binds NUP153. Only capsids that contain the mature viral genome can release the viral DNA and capsid protein into the nucleoplasm. Immature capsids get stuck in the basket. Capsids encapsulate the pre-genomic RNA and the P protein. Pre-genomic RNA is reverse-transcribed into DNA while the capsid is still in the cytoplasm. The capsid can then either be directed to the nucleus, providing more genomes for transcription, or bud through the endoplasmic reticulum to provide new virions. The sequence is that of Capsid protein from Hepatitis B virus genotype A1 subtype adw (isolate Philippines/pFDW294/1988) (HBV-A).